A 288-amino-acid polypeptide reads, in one-letter code: Bifunctional protein FolD (288 aa).

Residues 166–168 (GAS) and isoleucine 232 each bind NADP(+).

The protein belongs to the tetrahydrofolate dehydrogenase/cyclohydrolase family. In terms of assembly, homodimer.

It carries out the reaction (6R)-5,10-methylene-5,6,7,8-tetrahydrofolate + NADP(+) = (6R)-5,10-methenyltetrahydrofolate + NADPH. The catalysed reaction is (6R)-5,10-methenyltetrahydrofolate + H2O = (6R)-10-formyltetrahydrofolate + H(+). It functions in the pathway one-carbon metabolism; tetrahydrofolate interconversion. Its function is as follows. Catalyzes the oxidation of 5,10-methylenetetrahydrofolate to 5,10-methenyltetrahydrofolate and then the hydrolysis of 5,10-methenyltetrahydrofolate to 10-formyltetrahydrofolate. The sequence is that of Bifunctional protein FolD from Salmonella enteritidis PT4 (strain P125109).